The sequence spans 401 residues: Tryptophan synthase beta chain (401 aa).

Lys-88 bears the N6-(pyridoxal phosphate)lysine mark.

The protein belongs to the TrpB family. In terms of assembly, tetramer of two alpha and two beta chains. Requires pyridoxal 5'-phosphate as cofactor.

The enzyme catalyses (1S,2R)-1-C-(indol-3-yl)glycerol 3-phosphate + L-serine = D-glyceraldehyde 3-phosphate + L-tryptophan + H2O. It participates in amino-acid biosynthesis; L-tryptophan biosynthesis; L-tryptophan from chorismate: step 5/5. The beta subunit is responsible for the synthesis of L-tryptophan from indole and L-serine. This is Tryptophan synthase beta chain from Shewanella denitrificans (strain OS217 / ATCC BAA-1090 / DSM 15013).